We begin with the raw amino-acid sequence, 554 residues long: Inactive serine/threonine-protein kinase/endoribonuclease IRE1-like (554 aa).

The N-terminal stretch at 1–17 (MWLLAISLVGLLVVVVC) is a signal peptide. Residues 36-85 (KRDKNSAPRVSASGEDGTKNEQVEKKSDPSGGLGEENEKTNSESKVLSVP) are disordered. Residues 51–63 (DGTKNEQVEKKSD) are compositionally biased toward basic and acidic residues. The region spanning 121-408 (LVSTNEMKYG…ATQVLLHPLF (288 aa)) is the Protein kinase domain. Lys150 is a binding site for ATP. Residues 411–554 (SEKRLFFLRE…GEEAFEKYFN (144 aa)) form the KEN domain.

This sequence belongs to the protein kinase superfamily. Ser/Thr protein kinase family.

This Arabidopsis thaliana (Mouse-ear cress) protein is Inactive serine/threonine-protein kinase/endoribonuclease IRE1-like.